We begin with the raw amino-acid sequence, 577 residues long: Sulfite reductase [NADPH] hemoprotein beta-component 2 (577 aa).

Cysteine 441, cysteine 447, cysteine 486, and cysteine 490 together coordinate [4Fe-4S] cluster. Position 490 (cysteine 490) interacts with siroheme.

This sequence belongs to the nitrite and sulfite reductase 4Fe-4S domain family. As to quaternary structure, alpha(8)-beta(8). The alpha component is a flavoprotein, the beta component is a hemoprotein. Siroheme serves as cofactor. Requires [4Fe-4S] cluster as cofactor.

The catalysed reaction is hydrogen sulfide + 3 NADP(+) + 3 H2O = sulfite + 3 NADPH + 4 H(+). Its pathway is sulfur metabolism; hydrogen sulfide biosynthesis; hydrogen sulfide from sulfite (NADPH route): step 1/1. Functionally, component of the sulfite reductase complex that catalyzes the 6-electron reduction of sulfite to sulfide. This is one of several activities required for the biosynthesis of L-cysteine from sulfate. The polypeptide is Sulfite reductase [NADPH] hemoprotein beta-component 2 (Pectobacterium carotovorum subsp. carotovorum (strain PC1)).